A 788-amino-acid chain; its full sequence is Ribosome biogenesis protein ERB1 (788 aa).

The interval 1 to 91 is disordered; sequence MGDLKGSRKR…SKPIREKSKP (91 aa). Residues 38-50 are compositionally biased toward basic and acidic residues; sequence LSDKSHDTEHSSD. The segment covering 51–78 has biased composition (acidic residues); it reads SEIELVDDLSSDDGEEYEDEFDSDEIPS. Basic and acidic residues predominate over residues 80–91; sequence IESKPIREKSKP. 6 WD repeats span residues 433-472, 476-516, 613-651, 654-699, 703-742, and 758-788; these read GHSG…QIWS, SDEE…PEME, KGGG…LVKI, PGAR…RPYK, YHQK…DLLS, and TGEL…RLWT.

The protein belongs to the WD repeat BOP1/ERB1 family. As to quaternary structure, component of the NOP7 complex, composed of ERB1, NOP7 and YTM1. The complex is held together by ERB1, which interacts with NOP7 via its N-terminal domain and with YTM1 via a high-affinity interaction between the seven-bladed beta-propeller domains of the 2 proteins. The NOP7 complex associates with the 66S pre-ribosome.

The protein resides in the nucleus. Its subcellular location is the nucleolus. It localises to the nucleoplasm. Component of the NOP7 complex, which is required for maturation of the 25S and 5.8S ribosomal RNAs and formation of the 60S ribosome. The sequence is that of Ribosome biogenesis protein ERB1 from Ajellomyces capsulatus (strain NAm1 / WU24) (Darling's disease fungus).